The chain runs to 299 residues: tRNA dimethylallyltransferase (299 aa).

13 to 20 (GATASGKT) contributes to the ATP binding site. 15 to 20 (TASGKT) contacts substrate. The interval 38–41 (DSRQ) is interaction with substrate tRNA.

The protein belongs to the IPP transferase family. In terms of assembly, monomer. Mg(2+) is required as a cofactor.

The catalysed reaction is adenosine(37) in tRNA + dimethylallyl diphosphate = N(6)-dimethylallyladenosine(37) in tRNA + diphosphate. Catalyzes the transfer of a dimethylallyl group onto the adenine at position 37 in tRNAs that read codons beginning with uridine, leading to the formation of N6-(dimethylallyl)adenosine (i(6)A). The polypeptide is tRNA dimethylallyltransferase (Prochlorococcus marinus (strain MIT 9312)).